We begin with the raw amino-acid sequence, 237 residues long: Probable transcriptional regulatory protein Exig_1693 (237 aa).

It belongs to the TACO1 family. YeeN subfamily.

The protein localises to the cytoplasm. In Exiguobacterium sibiricum (strain DSM 17290 / CCUG 55495 / CIP 109462 / JCM 13490 / 255-15), this protein is Probable transcriptional regulatory protein Exig_1693.